An 804-amino-acid polypeptide reads, in one-letter code: Leucine--tRNA ligase (804 aa).

The 'HIGH' region signature appears at 39 to 50; the sequence is PFPSGKGLHVGH. The 'KMSKS' region motif lies at 573-577; it reads KMSKS. Position 576 (lysine 576) interacts with ATP.

Belongs to the class-I aminoacyl-tRNA synthetase family.

It localises to the cytoplasm. It carries out the reaction tRNA(Leu) + L-leucine + ATP = L-leucyl-tRNA(Leu) + AMP + diphosphate. This Lactobacillus gasseri (strain ATCC 33323 / DSM 20243 / BCRC 14619 / CIP 102991 / JCM 1131 / KCTC 3163 / NCIMB 11718 / NCTC 13722 / AM63) protein is Leucine--tRNA ligase.